A 487-amino-acid polypeptide reads, in one-letter code: Diacylglycerol kinase 4 (487 aa).

The DAGKc domain occupies 86-242; sequence TPEVPLMVFV…LDSWNILITM (157 aa).

Belongs to the eukaryotic diacylglycerol kinase family. In terms of assembly, monomer. In terms of tissue distribution, highly expressed in pollen grains. Expressed in roots, hypocotyls, leaf vasculature, developing anthers and stigmas, and receptacles of siliques.

Its subcellular location is the endoplasmic reticulum. The protein localises to the cytoplasm. It localises to the cytosol. It carries out the reaction a 1,2-diacyl-sn-glycerol + ATP = a 1,2-diacyl-sn-glycero-3-phosphate + ADP + H(+). In terms of biological role, phosphorylates the second messenger diacylglycerol (DAG) to generate phosphatidic acid (PA), another important signaling molecule. PA is required for plant development and responses to abiotic stress and pathogen attack. May be involved in the accumulation of PA during cold stress. Involved in the regulation of PA and phosphatidylcholine biosynthesis in growing pollen tubes. Required for nitric oxide-dependent pollen tube growth and re-orientation responses. Functions together with DGK2 in male gametophyte development and biosynthesis of phosphatidylglycerol and phosphatidylinositol in the endoplasmic reticulum (ER). Involved in PA production for pollen grain growth, as well as leaf and root growth. Possesses guanylyl cyclase activity in vitro. The protein is Diacylglycerol kinase 4 of Arabidopsis thaliana (Mouse-ear cress).